Here is a 150-residue protein sequence, read N- to C-terminus: UPF0208 membrane protein VP2081 (150 aa).

2 consecutive transmembrane segments (helical) span residues 42 to 62 (FGIK…MAFN) and 70 to 90 (SIVV…WLGA).

The protein belongs to the UPF0208 family.

It is found in the cell inner membrane. In Vibrio parahaemolyticus serotype O3:K6 (strain RIMD 2210633), this protein is UPF0208 membrane protein VP2081.